We begin with the raw amino-acid sequence, 295 residues long: Indole-3-glycerol phosphate synthase (295 aa).

The protein belongs to the TrpC family.

The catalysed reaction is 1-(2-carboxyphenylamino)-1-deoxy-D-ribulose 5-phosphate + H(+) = (1S,2R)-1-C-(indol-3-yl)glycerol 3-phosphate + CO2 + H2O. Its pathway is amino-acid biosynthesis; L-tryptophan biosynthesis; L-tryptophan from chorismate: step 4/5. This is Indole-3-glycerol phosphate synthase from Prochlorococcus marinus (strain MIT 9211).